Consider the following 514-residue polypeptide: Pantothenate transporter liz1 (514 aa).

The next 12 helical transmembrane spans lie at 24–44 (LLIK…FINY), 72–92 (INVV…YALQ), 98–118 (LWFS…FAVH), 128–148 (FFMA…LGAW), 159–179 (GIFS…QTAV), 194–214 (WLFI…LFLF), 263–283 (GLCI…NVLM), 300–320 (NYPT…SVIS), 329–349 (WPFG…LLAW), 357–377 (FFAY…FSWA), 390–410 (VVVF…APIM), and 423–443 (LIGL…VSYM).

It belongs to the major facilitator superfamily. Allantoate permease family.

It localises to the cell membrane. Transports pantothenate into the cell. The protein is Pantothenate transporter liz1 (liz1) of Schizosaccharomyces pombe (strain 972 / ATCC 24843) (Fission yeast).